A 243-amino-acid polypeptide reads, in one-letter code: UPF0173 metal-dependent hydrolase Caur_2542 (243 aa).

This sequence belongs to the UPF0173 family.

The chain is UPF0173 metal-dependent hydrolase Caur_2542 from Chloroflexus aurantiacus (strain ATCC 29366 / DSM 635 / J-10-fl).